The chain runs to 214 residues: Putative glucose-6-phosphate isomerase 1 (214 aa).

4 residues coordinate Fe cation: His-92, His-94, Glu-101, and His-140.

It belongs to the archaeal-type GPI family. As to quaternary structure, homodimer. It depends on Fe cation as a cofactor.

The protein resides in the cytoplasm. It catalyses the reaction alpha-D-glucose 6-phosphate = beta-D-fructose 6-phosphate. It functions in the pathway carbohydrate degradation; glycolysis; D-glyceraldehyde 3-phosphate and glycerone phosphate from D-glucose: step 2/4. The chain is Putative glucose-6-phosphate isomerase 1 (pgiA1) from Rhizobium meliloti (strain 1021) (Ensifer meliloti).